Consider the following 833-residue polypeptide: Piwi-like protein 2 (833 aa).

The 127-residue stretch at 227–353 (RINRVLNDNS…IPGELCFLCG (127 aa)) folds into the PAZ domain. The segment at 313 to 338 (PMRRERKKKDEEGVEKEKEKEAPEEK) is disordered. Positions 320 to 338 (KKDEEGVEKEKEKEAPEEK) are enriched in basic and acidic residues. The 301-residue stretch at 515–815 (KMALVFVPDD…LAELVGKVHK (301 aa)) folds into the Piwi domain.

It belongs to the argonaute family. Piwi subfamily. In terms of tissue distribution, expressed in dividing adult stem cells.

Required for the production of functional progeny from adult somatic stem cells (neoblasts). The chain is Piwi-like protein 2 (wi-2) from Schmidtea mediterranea (Freshwater planarian flatworm).